The primary structure comprises 240 residues: Membrane-spanning 4-domains subfamily A member 7 (240 aa).

The Cytoplasmic segment spans residues 1–47 (MLLQSQTMGVSHSFTPKGITIPQREKPGHMYQNEDYLQNGLPTETTV). A helical transmembrane segment spans residues 48–68 (LGTVQILCCLLISSLGAILVF). Residues 69-83 (APYPSHFNPAISTTL) are Extracellular-facing. Residues 84–104 (MSGYPFLGALCFGITGSLSII) traverse the membrane as a helical segment. At 105–121 (SGKQSTKPFDLSSLTSN) the chain is on the cytoplasmic side. A helical membrane pass occupies residues 122–142 (AVSSVTAGAGLFLLADSMVAL). At 143 to 178 (RTASQHCGSEMDYLSSLPYSEYYYPIYEIKDCLLTS) the chain is on the extracellular side. A helical transmembrane segment spans residues 179–199 (VSLTGVLVVMLIFTVLELLLA). Over 200–240 (AYSSVFWWKQLYSNNPGSSFSSTQSQDHIQQVKKSSSRSWI) the chain is Cytoplasmic. Residues 218-240 (SFSSTQSQDHIQQVKKSSSRSWI) form a disordered region.

This sequence belongs to the MS4A family. Ubiquitous expression in normal tissues. Expression is more elevated in adult liver, lung, spleen, and heart than in their fetal counterparts, and is higher in normal tissues than in the cancerous tissue or cell lines. Low levels of expression were detected in the promonocytic stage, whereas high levels of expression were detected in mature monocytes.

The protein localises to the membrane. Its function is as follows. May be involved in signal transduction as a component of a multimeric receptor complex. This Homo sapiens (Human) protein is Membrane-spanning 4-domains subfamily A member 7 (MS4A7).